The chain runs to 300 residues: Bis(5'-nucleosyl)-tetraphosphatase, symmetrical (300 aa).

It belongs to the Ap4A hydrolase family.

The enzyme catalyses P(1),P(4)-bis(5'-adenosyl) tetraphosphate + H2O = 2 ADP + 2 H(+). Hydrolyzes diadenosine 5',5'''-P1,P4-tetraphosphate to yield ADP. The chain is Bis(5'-nucleosyl)-tetraphosphatase, symmetrical from Pseudomonas syringae pv. tomato (strain ATCC BAA-871 / DC3000).